The sequence spans 122 residues: Basic phospholipase A2 homolog (122 aa).

Cystine bridges form between Cys-26–Cys-115, Cys-28–Cys-44, Cys-43–Cys-95, Cys-49–Cys-122, Cys-50–Cys-88, Cys-57–Cys-81, and Cys-75–Cys-86. Residues 105–117 (KRYMTYPNILCSS) are important for membrane-damaging activities in eukaryotes and bacteria; heparin-binding.

The protein belongs to the phospholipase A2 family. Group II subfamily. N49 sub-subfamily. As to expression, expressed by the venom gland.

It is found in the secreted. The chain is Basic phospholipase A2 homolog from Gloydius halys (Chinese water mocassin).